The chain runs to 192 residues: A-type ATP synthase subunit E (192 aa).

The protein belongs to the V-ATPase E subunit family. As to quaternary structure, has multiple subunits with at least A(3), B(3), C, D, E, F, H, I and proteolipid K(x).

It is found in the cell membrane. Component of the A-type ATP synthase that produces ATP from ADP in the presence of a proton gradient across the membrane. This Halorubrum lacusprofundi (strain ATCC 49239 / DSM 5036 / JCM 8891 / ACAM 34) protein is A-type ATP synthase subunit E.